Reading from the N-terminus, the 315-residue chain is Methionyl-tRNA formyltransferase (315 aa).

Position 113–116 (113–116 (SILP)) interacts with (6S)-5,6,7,8-tetrahydrofolate.

Belongs to the Fmt family.

It carries out the reaction L-methionyl-tRNA(fMet) + (6R)-10-formyltetrahydrofolate = N-formyl-L-methionyl-tRNA(fMet) + (6S)-5,6,7,8-tetrahydrofolate + H(+). In terms of biological role, attaches a formyl group to the free amino group of methionyl-tRNA(fMet). The formyl group appears to play a dual role in the initiator identity of N-formylmethionyl-tRNA by promoting its recognition by IF2 and preventing the misappropriation of this tRNA by the elongation apparatus. The protein is Methionyl-tRNA formyltransferase of Vibrio vulnificus (strain CMCP6).